Here is a 979-residue protein sequence, read N- to C-terminus: Receptor-type tyrosine-protein phosphatase-like N (979 aa).

A signal peptide spans 1–37 (MRRPRRPGGSGGSGGSGGLRLLVCLLLLSGRPGGCSA). Positions 38–134 (ISAHGCLFDR…HPRDRSGLVP (97 aa)) are RESP18 homology domain. Residues 38–575 (ISAHGCLFDR…RQAHGISPMR (538 aa)) are Lumenal-facing. The cysteines at positions 56 and 65 are disulfide-linked. Positions 113–130 (MERIPRLRPPEPHPRDRS) are enriched in basic and acidic residues. Disordered stretches follow at residues 113-173 (MERI…GSPL), 289-330 (GRAR…AAQP), and 392-443 (MQRG…SSSV). Polar residues predominate over residues 145 to 155 (TQGNPTGSSPA). A compositionally biased stretch (basic and acidic residues) spans 303-322 (RAEDSSEGHEEEVLGGRGEK). 2 positions are modified to phosphoserine: S307 and S308. Over residues 414–424 (SPASSEVQQVL) the composition is skewed to polar residues. Residues 449–575 (SPLGQSQPTV…RQAHGISPMR (127 aa)) are sufficient for dimerization of proICA512. N-linked (GlcNAc...) asparagine glycosylation is found at N506 and N524. A helical transmembrane segment spans residues 576 to 600 (SVLLTLVALAGVAGLLVALAVALCM). The sufficient for dimerization of proICA512 stretch occupies residues 601 to 732 (RHHSRQRDKE…PNTCAAAQDE (132 aa)). The Cytoplasmic portion of the chain corresponds to 601–979 (RHHSRQRDKE…VNAILKALPQ (379 aa)). Residues 644 to 680 (RAEGQPEPSRVSSVSSQFSDAAQASPSSHSSTPSWCE) form a disordered region. A compositionally biased stretch (low complexity) spans 648-677 (QPEPSRVSSVSSQFSDAAQASPSSHSSTPS). The region spanning 709 to 969 (LAKEWQALCA…EFALTAVAEE (261 aa)) is the Tyrosine-protein phosphatase domain. K754 is covalently cross-linked (Glycyl lysine isopeptide (Lys-Gly) (interchain with G-Cter in SUMO)).

Belongs to the protein-tyrosine phosphatase family. Receptor class 8 subfamily. As to quaternary structure, homodimer; shown for the unprocessed protein (proICA512) in the endoplasmic reticulum and resolved during protein maturation as ICA512-TMF seems to be predominantly monomeric in secretory granules; however, ICA512-CCF interacts with ICA512-TMF disrupting the ICA512-TMF:SNTB2 complex. The isolated lumenal RESP18 homology domain has been shown to form disulfide-linked homooligomers. Interacts (via cytoplasmic domain) with phosphorylated SNTB2; this protects PTPRN against cleavage by CAPN1 to produce ICA512-CCF. Dephosphorylation of SNTB2 upon insulin stimulation disrupts the interaction and results in PTPRN cleavage. Interacts with SNX19. ICA512-CCF interacts with PIAS4; in the nucleus. Interacts with STAT5B (phosphorylated); down-regulated by ICA512-CCF sumoylation; ICA512-CCF prevents STAT5B dephosphorylation; ICA512-CCF mediates interaction of STAT5B with PIAS4. Interacts (via RESP18 homology domain) with insulin and proinsulin. Interacts with PTPRN2, PTPRA and PTPRE. Subject to proteolytic cleavage at multiple sites. Subject to cleavage on a pair of basic residues. On exocytosis of secretory granules in pancreatic beta-cells ICA512-TMF is transiently inserted in the plasma-membrane and cleaved by mu-type calpain CPN1 to yield ICA512-CCF. Post-translationally, O-glycosylated. In terms of processing, N-glycosylated. Sumoylated at two sites including Lys-754. Sumoylation decreases interaction with STAT5. As to expression, detected in pituitary. Detected in brain (at protein level). Detected in brain. Weakly expressed in the colon, intestine, stomach and pancreas.

Its subcellular location is the membrane. It localises to the cytoplasmic vesicle. The protein localises to the secretory vesicle membrane. The protein resides in the perikaryon. It is found in the cell projection. Its subcellular location is the axon. It localises to the synapse. The protein localises to the cell membrane. The protein resides in the endosome. It is found in the nucleus. Its function is as follows. Plays a role in vesicle-mediated secretory processes. Required for normal accumulation of secretory vesicles in hippocampus, pituitary and pancreatic islets. Required for the accumulation of normal levels of insulin-containing vesicles and preventing their degradation. Plays a role in insulin secretion in response to glucose stimuli. Required for normal accumulation of the neurotransmitters norepinephrine, dopamine and serotonin in the brain. In females, but not in males, required for normal accumulation and secretion of pituitary hormones, such as luteinizing hormone (LH) and follicle-stimulating hormone (FSH). Seems to lack intrinsic enzyme activity. Required to maintain normal levels of renin expression and renin release. May regulate catalytic active protein-tyrosine phosphatases such as PTPRA through dimerization. ICA512-TMF regulates dynamics and exocytosis of insulin secretory granules (SGs); binding of ICA512-TMF to SNTB2/beta-2-syntrophin is proposed to restrain SGs mobility and exocytosis by tethering them to the actin cytoskeleton depending on UTRN; the function is inhibited by cytoplasmic ICA512-CFF dimerizing with ICA512-TMF and displacing SNTB2. Functionally, ICA512-CCF translocated to the nucleus promotes expression of insulin and other granule-related genes; the function implicates binding to and regulating activity of STAT5B probably by preventing its dephosphorylation and potentially by inducing its sumoylation by recruiting PIAS4. Enhances pancreatic beta-cell proliferation by converging with signaling by STAT5B and STAT3. ICA512-CCF located in the cytoplasm regulates dynamics and exocytosis of insulin secretory granules (SGs) by dimerizing with ICA512-TMF and displacing SNTB2 thus enhancing SGs mobility and exocytosis. This is Receptor-type tyrosine-protein phosphatase-like N (Ptprn) from Mus musculus (Mouse).